The chain runs to 314 residues: tRNA pseudouridine synthase B (314 aa).

His-43 is a substrate binding site. The active-site Nucleophile is the Asp-48. The substrate site is built by Tyr-76, Tyr-179, and Leu-200.

This sequence belongs to the pseudouridine synthase TruB family. Type 1 subfamily.

The catalysed reaction is uridine(55) in tRNA = pseudouridine(55) in tRNA. Functionally, responsible for synthesis of pseudouridine from uracil-55 in the psi GC loop of transfer RNAs. This Pectobacterium atrosepticum (strain SCRI 1043 / ATCC BAA-672) (Erwinia carotovora subsp. atroseptica) protein is tRNA pseudouridine synthase B.